The primary structure comprises 275 residues: Large ribosomal subunit protein uL2 (275 aa).

The tract at residues 222-257 (GTAMNAVDHPHGGGRGRSKGNNQPRSPWNQPAKGFK) is disordered. Over residues 240–250 (KGNNQPRSPWN) the composition is skewed to polar residues.

The protein belongs to the universal ribosomal protein uL2 family. In terms of assembly, part of the 50S ribosomal subunit. Forms a bridge to the 30S subunit in the 70S ribosome.

Functionally, one of the primary rRNA binding proteins. Required for association of the 30S and 50S subunits to form the 70S ribosome, for tRNA binding and peptide bond formation. It has been suggested to have peptidyltransferase activity; this is somewhat controversial. Makes several contacts with the 16S rRNA in the 70S ribosome. This is Large ribosomal subunit protein uL2 from Endomicrobium trichonymphae.